Here is a 305-residue protein sequence, read N- to C-terminus: Target of rapamycin complex subunit LST8-1 (305 aa).

WD repeat units lie at residues 1-30 (MSQPSVILATASYDHTIRFWEAETGRCYRT), 33-71 (YPDSHVNRLEITPDKHYLAAACNPHIRLFDVNSNSPQPV), 76-115 (SHTNNVMAVGFQCDAKWMYSGSEDGTVKIWDLRAPGCQKE), 117-156 (ESVAAVNTVVLHPNQTELISGDQNGNIRVWDLRANSCSCE), 160-199 (EVDTAVRSLTVMWDGTMVVAANNRGTCYVWRLLRGKQTMT), 209-248 (AHNGHILKCLLSPANKYLATASSDKTVKIWNVDGFKLEKV), and 251-292 (GHQR…KVYQ).

The protein belongs to the WD repeat LST8 family. The target of rapamycin complex 1 (TORC1) is composed of at least RAPTOR, LST8 and TOR. Interacts with TOR. Expressed in the root central cylinder, root tips, emerging lateral roots, vasculature of cotyledons, leaf stomata, leaf stipules, anthers, pollen, filaments, and vasculature of petals and sepals.

It localises to the endosome. In terms of biological role, component of TORC1 complex, which is an essential cell growth regulator that controls plant development. Acts by activating transcription, protein synthesis and ribosome biogenesis, and inhibiting mRNA degradation and autophagy. Involved in regulating amino acid accumulation and the synthesis of myo-inositol and raffinose during plant adaptation to long days. Involved in the regulation of plant growth and abscisic acid (ABA) accumulation. Acts as a positive regulation of the ABA biosynthetic genes ZEP, NCED3 and AAO3, and negative regulator of the ABA catabolic genes CYP707A2 and CYP707A3. The chain is Target of rapamycin complex subunit LST8-1 from Arabidopsis thaliana (Mouse-ear cress).